Reading from the N-terminus, the 413-residue chain is NPL4-like protein 1 (413 aa).

Serine 104 is subject to Phosphoserine. An MPN domain is found at serine 131–methionine 272.

This sequence belongs to the NPL4 family.

It functions in the pathway protein degradation; proteasomal ubiquitin-dependent pathway. Functionally, may be part of a complex that binds ubiquitinated proteins and that is necessary for the export of misfolded proteins from the ER to the cytoplasm, where they are degraded by the proteasome. This is NPL4-like protein 1 from Arabidopsis thaliana (Mouse-ear cress).